Consider the following 165-residue polypeptide: Phosphopantetheine adenylyltransferase (165 aa).

A substrate-binding site is contributed by Thr10. Residues 10-11 (TF) and His18 each bind ATP. Substrate is bound by residues Lys42, Leu75, and Arg89. ATP contacts are provided by residues 90-92 (GLR), Glu100, and 125-131 (YTYVASS).

Belongs to the bacterial CoaD family. In terms of assembly, homohexamer. Mg(2+) is required as a cofactor.

The protein resides in the cytoplasm. It carries out the reaction (R)-4'-phosphopantetheine + ATP + H(+) = 3'-dephospho-CoA + diphosphate. The protein operates within cofactor biosynthesis; coenzyme A biosynthesis; CoA from (R)-pantothenate: step 4/5. Reversibly transfers an adenylyl group from ATP to 4'-phosphopantetheine, yielding dephospho-CoA (dPCoA) and pyrophosphate. The polypeptide is Phosphopantetheine adenylyltransferase (Chlorobium phaeobacteroides (strain BS1)).